The chain runs to 379 residues: Deoxyhypusine synthase (379 aa).

Residues 108 to 112 (SNLIS), 134 to 136 (TAG), glutamate 140, and aspartate 257 each bind NAD(+). Residue 139–140 (EE) participates in spermidine binding. Aspartate 262 is a binding site for spermidine. Residue glycine 304 participates in NAD(+) binding. Histidine 309 contacts spermidine. NAD(+) is bound at residue 329–330 (TG). Spermidine is bound by residues 335–337 (GSD) and 344–350 (EAVSWGK). Lysine 350 functions as the Nucleophile in the catalytic mechanism. 363–364 (DA) serves as a coordination point for NAD(+).

This sequence belongs to the deoxyhypusine synthase family. It depends on NAD(+) as a cofactor.

It carries out the reaction [eIF5A protein]-L-lysine + spermidine = [eIF5A protein]-deoxyhypusine + propane-1,3-diamine. It participates in protein modification; eIF5A hypusination. Functionally, catalyzes the NAD-dependent oxidative cleavage of spermidine and the subsequent transfer of the butylamine moiety of spermidine to the epsilon-amino group of a specific lysine residue of the eIF-5A precursor protein to form the intermediate deoxyhypusine residue. The polypeptide is Deoxyhypusine synthase (DYS1) (Kluyveromyces lactis (strain ATCC 8585 / CBS 2359 / DSM 70799 / NBRC 1267 / NRRL Y-1140 / WM37) (Yeast)).